Consider the following 145-residue polypeptide: Basic phospholipase A2 P'513 (145 aa).

The first 21 residues, methionine 1–alanine 21, serve as a signal peptide directing secretion. Residues isoleucine 22–leucine 27 constitute a propeptide that is removed on maturation. Cystine bridges form between cysteine 38–cysteine 98, cysteine 54–cysteine 144, cysteine 56–cysteine 72, cysteine 71–cysteine 125, cysteine 78–cysteine 118, cysteine 87–cysteine 111, and cysteine 105–cysteine 116. 3 residues coordinate Ca(2+): tyrosine 55, glycine 57, and glycine 59. Residue histidine 75 is part of the active site. Aspartate 76 contacts Ca(2+). Residue aspartate 119 is part of the active site.

It belongs to the phospholipase A2 family. Group I subfamily. D49 sub-subfamily. Requires Ca(2+) as cofactor. In terms of tissue distribution, expressed by the venom gland.

The protein localises to the secreted. It carries out the reaction a 1,2-diacyl-sn-glycero-3-phosphocholine + H2O = a 1-acyl-sn-glycero-3-phosphocholine + a fatty acid + H(+). Functionally, PLA2 catalyzes the calcium-dependent hydrolysis of the 2-acyl groups in 3-sn-phosphoglycerides. The sequence is that of Basic phospholipase A2 P'513 from Laticauda laticaudata (Blue-ringed sea krait).